Here is a 243-residue protein sequence, read N- to C-terminus: uncharacterized protein (243 aa).

A disordered region spans residues 157–181 (SEETKEQPDATTSEKSRSPECPKTT).

This is an uncharacterized protein from Rattus norvegicus (Rat).